A 142-amino-acid polypeptide reads, in one-letter code: Large ribosomal subunit protein uL16 (142 aa).

Residues 1-14 are compositionally biased toward basic residues; it reads MLSPRRTKFRKQQR. The interval 1–22 is disordered; it reads MLSPRRTKFRKQQRGRMTGKAT.

It belongs to the universal ribosomal protein uL16 family. In terms of assembly, part of the 50S ribosomal subunit.

Its function is as follows. Binds 23S rRNA and is also seen to make contacts with the A and possibly P site tRNAs. This chain is Large ribosomal subunit protein uL16, found in Synechococcus elongatus (strain ATCC 33912 / PCC 7942 / FACHB-805) (Anacystis nidulans R2).